A 278-amino-acid chain; its full sequence is Phosphatidylglycerol--prolipoprotein diacylglyceryl transferase (278 aa).

The next 4 membrane-spanning stretches (helical) occupy residues 17–37 (LAVR…ILLG), 57–77 (ALFY…VLFY), 89–109 (ILAI…VAIA), and 119–139 (LSWL…LGAG). An a 1,2-diacyl-sn-glycero-3-phospho-(1'-sn-glycerol)-binding site is contributed by arginine 140. 3 helical membrane-spanning segments follow: residues 174–194 (QLYE…LYSA), 200–220 (GAVT…CEFF), and 233–253 (LGIS…IALL).

It belongs to the Lgt family.

It is found in the cell inner membrane. The catalysed reaction is L-cysteinyl-[prolipoprotein] + a 1,2-diacyl-sn-glycero-3-phospho-(1'-sn-glycerol) = an S-1,2-diacyl-sn-glyceryl-L-cysteinyl-[prolipoprotein] + sn-glycerol 1-phosphate + H(+). Its pathway is protein modification; lipoprotein biosynthesis (diacylglyceryl transfer). In terms of biological role, catalyzes the transfer of the diacylglyceryl group from phosphatidylglycerol to the sulfhydryl group of the N-terminal cysteine of a prolipoprotein, the first step in the formation of mature lipoproteins. The chain is Phosphatidylglycerol--prolipoprotein diacylglyceryl transferase from Nitrosomonas europaea (strain ATCC 19718 / CIP 103999 / KCTC 2705 / NBRC 14298).